The following is a 107-amino-acid chain: Disintegrin lebestatin (107 aa).

The signal sequence occupies residues 1–20 (MIQVLLVIICLAVFPFQGSS). Positions 21–64 (KTLKSGNVNDYEVVNPGTVTGLPKGAVEEKHEPMKGNTLQKFPL) are excised as a propeptide. Intrachain disulfides connect Cys-65–Cys-74, Cys-70–Cys-93, Cys-71–Cys-98, and Cys-83–Cys-100. Residues 65–105 (CTTGPCCRQCKLKPAGTTCWKTSRTSHYCTGKSCDCPSYPG) form the Disintegrin domain. The Cell attachment site; atypical (KTS) signature appears at 85-87 (KTS). The propeptide occupies 106–107 (NG).

As to quaternary structure, monomer. As to expression, expressed by the venom gland.

It localises to the secreted. Functionally, specifically interacts with the alpha-1/beta-1 integrin (ITGA1/ITGB1). Exhibits highly inhibitory effects on cell adhesion and cell migration to collagens I and IV. Also shows in vivo anti-angiogenic activity. The sequence is that of Disintegrin lebestatin from Macrovipera lebetinus (Levantine viper).